Here is a 65-residue protein sequence, read N- to C-terminus: Hirudin-3B (65 aa).

The segment at V1–Y3 is interaction with thrombin active site. 3 disulfide bridges follow: C6-C14, C16-C28, and C22-C39. Residues V40 to Q65 are disordered. T45 is a glycosylation site (O-linked (GalNAc...) threonine). An interaction with fibrinogen-binding exosite of thrombin region spans residues D55–Q65. Residues D55–Q65 are compositionally biased toward acidic residues. Residue Y63 is modified to Sulfotyrosine.

It belongs to the protease inhibitor I14 (hirudin) family.

The protein resides in the secreted. Functionally, hirudin is a potent thrombin-specific protease inhibitor. It forms a stable non-covalent complex with alpha-thrombin, thereby abolishing its ability to cleave fibrinogen. The polypeptide is Hirudin-3B (Hirudo medicinalis (Medicinal leech)).